Consider the following 479-residue polypeptide: MSEGEIVQVIGPVIDVKFPIDKNLPNINNALRVIKSENESIVLEVTVELGDGVLRTIAMESTDGLRRGMKVEDTGGPISVPVGEDTLGRVFNVLGQPIDGGPAFSKDHPRESIHKEAPKYEDLTTSREILETGIKVIDLLEPYVRGGKVGLFGGAGVGKTTIIQELIHNIAQEHGGISVFTGVGERTREGNDLYFEMKASGVLSKTAMVFGQMNEPPGARMRVALTGLTLAEYFRDVEGQDVLLFIDNIFRFTQAGSEVSALLGRMPSAVGYQPTLATEMGQLQERITSTKKGSITSIQAVYVPADDYTDPAPSTTFAHLDATTNLERSLVEQGIYPAVDPLESSSSALDPEVVGKEHYEVATRVQHVLQRYHELQDIISVLGMDELSDEEKLIVARARKVQFFLSQNFFVAEQFTGVPGSYVPIKETIKGFKLILDGHLDDLPEDSFRGVGPIEDVLKKAQEMGVTPSDPEAKALLEK.

153-160 is a binding site for ATP; sequence GGAGVGKT.

Belongs to the ATPase alpha/beta chains family. In terms of assembly, F-type ATPases have 2 components, CF(1) - the catalytic core - and CF(0) - the membrane proton channel. CF(1) has five subunits: alpha(3), beta(3), gamma(1), delta(1), epsilon(1). CF(0) has three main subunits: a(1), b(2) and c(9-12). The alpha and beta chains form an alternating ring which encloses part of the gamma chain. CF(1) is attached to CF(0) by a central stalk formed by the gamma and epsilon chains, while a peripheral stalk is formed by the delta and b chains.

It is found in the cell membrane. It catalyses the reaction ATP + H2O + 4 H(+)(in) = ADP + phosphate + 5 H(+)(out). Its function is as follows. Produces ATP from ADP in the presence of a proton gradient across the membrane. The catalytic sites are hosted primarily by the beta subunits. This Lactobacillus helveticus (strain DPC 4571) protein is ATP synthase subunit beta.